Consider the following 311-residue polypeptide: Pyrimidine-specific ribonucleoside hydrolase RihA (311 aa).

Residue His-240 is part of the active site.

It belongs to the IUNH family. RihA subfamily.

Hydrolyzes with equal efficiency cytidine or uridine to ribose and cytosine or uracil, respectively. The polypeptide is Pyrimidine-specific ribonucleoside hydrolase RihA (Escherichia coli O81 (strain ED1a)).